A 352-amino-acid polypeptide reads, in one-letter code: Phosphatidylglycerol--prolipoprotein diacylglyceryl transferase (352 aa).

4 helical membrane-spanning segments follow: residues 20-40, 55-75, 97-117, and 122-142; these read WYGLSYMMGFICAYILITWLA, FITYAAIGTLVGGRLGYVLFY, EGGMASHGGIIGIVIACLLYA, and VNSLYLLDLVAVTGPIGVFFG. Residue R143 participates in a 1,2-diacyl-sn-glycero-3-phospho-(1'-sn-glycerol) binding. Transmembrane regions (helical) follow at residues 248-268, 275-295, and 314-334; these read SQLFAAFGEGLLIFMFLFFLW, GFIAACFVLIYAVVRVVDEHF, and WLSLAMFVVGLILMVVWTRAA.

It belongs to the Lgt family.

The protein localises to the cell inner membrane. The enzyme catalyses L-cysteinyl-[prolipoprotein] + a 1,2-diacyl-sn-glycero-3-phospho-(1'-sn-glycerol) = an S-1,2-diacyl-sn-glyceryl-L-cysteinyl-[prolipoprotein] + sn-glycerol 1-phosphate + H(+). It participates in protein modification; lipoprotein biosynthesis (diacylglyceryl transfer). Catalyzes the transfer of the diacylglyceryl group from phosphatidylglycerol to the sulfhydryl group of the N-terminal cysteine of a prolipoprotein, the first step in the formation of mature lipoproteins. This chain is Phosphatidylglycerol--prolipoprotein diacylglyceryl transferase, found in Bdellovibrio bacteriovorus (strain ATCC 15356 / DSM 50701 / NCIMB 9529 / HD100).